We begin with the raw amino-acid sequence, 468 residues long: Adenylyltransferase and sulfurtransferase MOCS3-1 (468 aa).

ATP contacts are provided by residues glycine 111, aspartate 132, asparagine 139 to arginine 143, lysine 156, and aspartate 200 to asparagine 201. Zn(2+)-binding residues include cysteine 241 and cysteine 244. Cysteine 258 functions as the Glycyl thioester intermediate; for adenylyltransferase activity in the catalytic mechanism. Zn(2+)-binding residues include cysteine 316 and cysteine 319. One can recognise a Rhodanese domain in the interval aspartate 371–proline 466. Residue cysteine 426 is the Cysteine persulfide intermediate; for sulfurtransferase activity of the active site.

The protein in the N-terminal section; belongs to the HesA/MoeB/ThiF family. UBA4 subfamily. Zn(2+) serves as cofactor.

The protein resides in the cytoplasm. The enzyme catalyses [molybdopterin-synthase sulfur-carrier protein]-C-terminal Gly-Gly + ATP + H(+) = [molybdopterin-synthase sulfur-carrier protein]-C-terminal Gly-Gly-AMP + diphosphate. The catalysed reaction is [molybdopterin-synthase sulfur-carrier protein]-C-terminal Gly-Gly-AMP + S-sulfanyl-L-cysteinyl-[cysteine desulfurase] + AH2 = [molybdopterin-synthase sulfur-carrier protein]-C-terminal-Gly-aminoethanethioate + L-cysteinyl-[cysteine desulfurase] + A + AMP + 2 H(+). The protein operates within tRNA modification; 5-methoxycarbonylmethyl-2-thiouridine-tRNA biosynthesis. It participates in cofactor biosynthesis; molybdopterin biosynthesis. Functionally, plays a central role in 2-thiolation of mcm(5)S(2)U at tRNA wobble positions of cytosolic tRNA(Lys), tRNA(Glu) and tRNA(Gln). Also essential during biosynthesis of the molybdenum cofactor. Acts by mediating the C-terminal thiocarboxylation of sulfur carriers URM1 and MOCS2A. Its N-terminus first activates URM1 and MOCS2A as acyl-adenylates (-COAMP), then the persulfide sulfur on the catalytic cysteine is transferred to URM1 and MOCS2A to form thiocarboxylation (-COSH) of their C-terminus. The reaction probably involves hydrogen sulfide that is generated from the persulfide intermediate and that acts as a nucleophile towards URM1 and MOCS2A. Subsequently, a transient disulfide bond is formed. Does not use thiosulfate as sulfur donor; NFS1 probably acting as a sulfur donor for thiocarboxylation reactions. This Zea mays (Maize) protein is Adenylyltransferase and sulfurtransferase MOCS3-1.